The sequence spans 711 residues: Nucleolin (711 aa).

Residues 1–304 form a disordered region; the sequence is MVKLAKAGKN…KKQKVEGTEP (304 aa). Residues Lys-9, Lys-15, and Lys-16 each carry the N6-acetyllysine modification. Over residues 24–43 the composition is skewed to acidic residues; it reads VEEDSEDEEMSEDEEDDSSG. 4 positions are modified to phosphoserine: Ser-28, Ser-34, Ser-41, and Ser-42. A compositionally biased stretch (low complexity) spans 56-107; sequence AAATSAKKVVVSPTKKVAVATPAKKAAVTPGKKAAATPAKKTVTPAKAVATP. The stretch at 58–65 is repeat 1; it reads ATSAKKVV. Residues 58–135 are 8 X 8 AA tandem repeats of X-T-P-X-K-K-X-X; sequence ATSAKKVVVS…GAAIPAKGAK (78 aa). At Ser-67 the chain carries Phosphoserine. A phosphothreonine mark is found at Thr-69, Thr-76, Thr-84, and Thr-92. Tandem repeats lie at residues 75 to 82, 83 to 90, and 91 to 98. Lys-96 is subject to N6-acetyllysine. Phosphothreonine is present on Thr-99. The stretch at 99–104 is one 5; truncated repeat; that stretch reads TPAKAV. Lys-102 bears the N6-acetyllysine mark. The stretch at 105–112 is repeat 6; it reads ATPGKKGA. Residue Thr-106 is modified to Phosphothreonine. Position 109 is an N6-acetyllysine (Lys-109). A Phosphothreonine modification is found at Thr-113. Lys-116 carries the post-translational modification N6-acetyllysine. Repeat copies occupy residues 120-127 and 128-135. Thr-121 carries the phosphothreonine modification. Residues 122-137 are compositionally biased toward low complexity; sequence PGKKGAAIPAKGAKNG. Lys-124 is modified (N6-acetyllysine). A phosphoserine mark is found at Ser-145, Ser-153, Ser-184, and Ser-207. Composition is skewed to acidic residues over residues 145 to 171 and 184 to 212; these read SDEE…DEIE and SEDE…EEAM. At Thr-215 the chain carries Phosphothreonine. The span at 235–273 shows a compositional bias: acidic residues; it reads EDEDEEEDDEDEDDDDDEDDEDEDDDDEDEEEEEEEEEP. Residues 274 to 301 show a composition bias toward basic and acidic residues; it reads VKEAPGKRKKEMAKQKAAPEAKKQKVEG. A Glycyl lysine isopeptide (Lys-Gly) (interchain with G-Cter in SUMO1); alternate cross-link involves residue Lys-298. Lys-298 participates in a covalent cross-link: Glycyl lysine isopeptide (Lys-Gly) (interchain with G-Cter in SUMO2); alternate. The residue at position 302 (Thr-302) is a Phosphothreonine. RRM domains follow at residues 308-384 and 394-467; these read FNLF…KPKG and RTLL…YTGE. Lys-319 carries the post-translational modification N6-acetyllysine. A Glycyl lysine isopeptide (Lys-Gly) (interchain with G-Cter in SUMO1); alternate cross-link involves residue Lys-325. Lys-325 is covalently cross-linked (Glycyl lysine isopeptide (Lys-Gly) (interchain with G-Cter in SUMO2); alternate). Lys-349 carries the N6-acetyllysine modification. The residue at position 357 (Ser-357) is a Phosphoserine. At Thr-368 the chain carries Phosphothreonine. Lys-371 is covalently cross-linked (Glycyl lysine isopeptide (Lys-Gly) (interchain with G-Cter in SUMO2)). Lys-378 participates in a covalent cross-link: Glycyl lysine isopeptide (Lys-Gly) (interchain with G-Cter in SUMO2); alternate. Lys-378 carries the N6-acetyllysine; alternate modification. Lys-399 and Lys-404 each carry N6-acetyllysine. The residue at position 406 (Thr-406) is a Phosphothreonine. Residues Lys-428 and Lys-445 each carry the N6-acetyllysine modification. 2 positions are modified to phosphoserine: Ser-459 and Ser-461. Lys-468 and Lys-478 each carry N6-acetyllysine. One can recognise an RRM 3 domain in the interval 487–561; it reads KTLVLSNLSY…RAIRLELQGP (75 aa). Lys-514 is covalently cross-linked (Glycyl lysine isopeptide (Lys-Gly) (interchain with G-Cter in SUMO2); alternate). N6-acetyllysine; alternate is present on Lys-514. An N6-acetyllysine modification is found at Lys-522. Residue Ser-564 is modified to Phosphoserine. At Lys-573 the chain carries N6-acetyllysine. The 76-residue stretch at 573 to 648 folds into the RRM 4 domain; the sequence is KTLFVKGLSE…NKVTLDWAKP (76 aa). Lys-578 participates in a covalent cross-link: Glycyl lysine isopeptide (Lys-Gly) (interchain with G-Cter in SUMO2); alternate. Lys-578 is subject to N6-acetyllysine; alternate. Ser-581 is subject to Phosphoserine. Residue Lys-590 forms a Glycyl lysine isopeptide (Lys-Gly) (interchain with G-Cter in SUMO1); alternate linkage. A Glycyl lysine isopeptide (Lys-Gly) (interchain with G-Cter in SUMO2); alternate cross-link involves residue Lys-590. Ser-592 and Ser-620 each carry phosphoserine. Lys-625 participates in a covalent cross-link: Glycyl lysine isopeptide (Lys-Gly) (interchain with G-Cter in SUMO2). The tract at residues 641–711 is disordered; it reads VTLDWAKPKG…KPQGKKTKFE (71 aa). Lys-647 carries the N6-acetyllysine modification. Residues 651–697 are compositionally biased toward gly residues; that stretch reads EGGFGGRGGGRGGFGGRGGGRGGRGGFGGRGRGGFGGRGGFRGGRGG. An asymmetric dimethylarginine mark is found at Arg-657, Arg-661, Arg-667, Arg-671, Arg-674, Arg-680, Arg-682, Arg-688, and Arg-692. The residue at position 695 (Arg-695) is an Asymmetric dimethylarginine; alternate. Arg-695 is subject to Omega-N-methylarginine; alternate. Residues 698–711 show a composition bias toward basic and acidic residues; sequence GGDHKPQGKKTKFE.

As to quaternary structure, identified in a IGF2BP1-dependent mRNP granule complex containing untranslated mRNAs. Component of the SWAP complex that consists of NPM1, NCL/nucleolin, PARP1 and SWAP70. Component of a complex which is at least composed of HTATSF1/Tat-SF1, the P-TEFb complex components CDK9 and CCNT1, RNA polymerase II, SUPT5H, and NCL/nucleolin. Interacts with AICDA. Interacts with APTX. Interacts with C1QBP. Interacts with ERBB4. Interacts (via C-terminus) with FMR1 isoform 6 (via N-terminus). Interacts with GZF1; this interaction is important for nucleolar localization of GZF1. Interacts with NSUN2. Interacts with NVL. Interacts (via N-terminus domain) with SETX. Interacts (via RRM1 and C-terminal RRM4/Arg/Gly-rich domains) with TERT; the interaction is important for nucleolar localization of TERT. Interacts with WDR46. Interacts with ZFP36. Interacts with LRRC34. Interacts with RRP1B. Interacts with HNRNPU; this interaction occurs during mitosis. Interacts with RIOK1; RIOK1 recruits NCL to PRMT5 for symmetrically methylation. Interacts with ZBTB7B. Interacts with MDK; this interaction promotes NCL clustering and lateral movements of this complex into lipid rafts leading to MDK internalization. Interacts with HDGF. Interacts with ALKBH2. Interacts with IGFBP5; this interaction is necessary for IGFBP5 localization to the nucleus. Some glutamate residues are glycylated by TTLL8. This modification occurs exclusively on glutamate residues and results in a glycine chain on the gamma-carboxyl group. In terms of processing, symmetrically methylated by PRMT5.

The protein resides in the nucleus. It localises to the nucleolus. It is found in the cytoplasm. In terms of biological role, nucleolin is the major nucleolar protein of growing eukaryotic cells. It is found associated with intranucleolar chromatin and pre-ribosomal particles. It induces chromatin decondensation by binding to histone H1. It is thought to play a role in pre-rRNA transcription and ribosome assembly. May play a role in the process of transcriptional elongation. Binds RNA oligonucleotides with 5'-UUAGGG-3' repeats more tightly than the telomeric single-stranded DNA 5'-TTAGGG-3' repeats. The polypeptide is Nucleolin (NCL) (Macaca fascicularis (Crab-eating macaque)).